We begin with the raw amino-acid sequence, 306 residues long: MARTEGDTWDLGSSVGATATSVAANRAFASRSTAGGPEPLLNDPYADLLVEAVGLPHFIRVARGEIDFDDDPLFGARQMLEQITVRTRHFDDFFAGAMAAGPPKIRQAVILASGLDTRAYRLPWPAGTVVYEIDQPTVIEFKTAVLADAGVAPTAERRTVGIDLREDWPAALRGAGFDPTRPTAWIAEGLLIYLPPDAQDRLLDHITALSAPGSRLATEHMDAKALTGEWARAMTERARRHGSDVNLSELFYSGPRTSATEHLRAQGWQTEVLSSNDAYQAQGFAPVADHLVAMIGDSGYLTARLD.

S-adenosyl-L-methionine-binding positions include Asp134 and 163–164 (DL).

The protein belongs to the UPF0677 family.

Exhibits S-adenosyl-L-methionine-dependent methyltransferase activity. The chain is Putative S-adenosyl-L-methionine-dependent methyltransferase Mvan_1345 from Mycolicibacterium vanbaalenii (strain DSM 7251 / JCM 13017 / BCRC 16820 / KCTC 9966 / NRRL B-24157 / PYR-1) (Mycobacterium vanbaalenii).